The chain runs to 115 residues: Large ribosomal subunit protein uL24 (115 aa).

It belongs to the universal ribosomal protein uL24 family. In terms of assembly, part of the 50S ribosomal subunit.

One of two assembly initiator proteins, it binds directly to the 5'-end of the 23S rRNA, where it nucleates assembly of the 50S subunit. Functionally, one of the proteins that surrounds the polypeptide exit tunnel on the outside of the subunit. This Aster yellows witches'-broom phytoplasma (strain AYWB) protein is Large ribosomal subunit protein uL24.